A 903-amino-acid chain; its full sequence is HTH-type transcriptional regulator MalT (903 aa).

Position 39–46 (39–46 (CPAGYGKT)) interacts with ATP. One can recognise an HTH luxR-type domain in the interval 832–897 (ELIRTSPLTQ…EAVQQAQRLL (66 aa)). Residues 856 to 875 (NDQIANELDVAATTIKTHIR) constitute a DNA-binding region (H-T-H motif).

This sequence belongs to the MalT family. As to quaternary structure, monomer in solution. Oligomerizes to an active state in the presence of the positive effectors ATP and maltotriose.

With respect to regulation, activated by ATP and maltotriose, which are both required for DNA binding. In terms of biological role, positively regulates the transcription of the maltose regulon whose gene products are responsible for uptake and catabolism of malto-oligosaccharides. Specifically binds to the promoter region of its target genes, recognizing a short DNA motif called the MalT box. This Yersinia pseudotuberculosis serotype O:1b (strain IP 31758) protein is HTH-type transcriptional regulator MalT.